Consider the following 85-residue polypeptide: Large ribosomal subunit protein bL27 (85 aa).

A compositionally biased stretch (gly residues) spans 1–10 (MAQKKGGGST). Positions 1-20 (MAQKKGGGSTRNGRDSKPKM) are disordered.

The protein belongs to the bacterial ribosomal protein bL27 family.

The sequence is that of Large ribosomal subunit protein bL27 from Acidovorax ebreus (strain TPSY) (Diaphorobacter sp. (strain TPSY)).